The primary structure comprises 163 residues: Nucleotide-binding protein YajQ (163 aa).

The protein belongs to the YajQ family.

In terms of biological role, nucleotide-binding protein. In Shigella flexneri, this protein is Nucleotide-binding protein YajQ.